A 131-amino-acid chain; its full sequence is Large ribosomal subunit protein uL24 (131 aa).

It belongs to the universal ribosomal protein uL24 family. Part of the 50S ribosomal subunit.

In terms of biological role, one of two assembly initiator proteins, it binds directly to the 5'-end of the 23S rRNA, where it nucleates assembly of the 50S subunit. Located at the polypeptide exit tunnel on the outside of the subunit. This is Large ribosomal subunit protein uL24 from Korarchaeum cryptofilum (strain OPF8).